We begin with the raw amino-acid sequence, 165 residues long: Methylated-DNA--protein-cysteine methyltransferase (165 aa).

Catalysis depends on Cys-126, which acts as the Nucleophile; methyl group acceptor.

Belongs to the MGMT family.

Its subcellular location is the cytoplasm. The catalysed reaction is a 6-O-methyl-2'-deoxyguanosine in DNA + L-cysteinyl-[protein] = S-methyl-L-cysteinyl-[protein] + a 2'-deoxyguanosine in DNA. It catalyses the reaction a 4-O-methyl-thymidine in DNA + L-cysteinyl-[protein] = a thymidine in DNA + S-methyl-L-cysteinyl-[protein]. Its function is as follows. Involved in the cellular defense against the biological effects of O6-methylguanine (O6-MeG) and O4-methylthymine (O4-MeT) in DNA. Repairs the methylated nucleobase in DNA by stoichiometrically transferring the methyl group to a cysteine residue in the enzyme. This is a suicide reaction: the enzyme is irreversibly inactivated. This chain is Methylated-DNA--protein-cysteine methyltransferase, found in Mycobacterium bovis (strain ATCC BAA-935 / AF2122/97).